The primary structure comprises 237 residues: Orotidine 5'-phosphate decarboxylase (237 aa).

Residues D17, K39, 66-75, T121, R182, Q191, G211, and R212 each bind substrate; that span reads DLKLHDIGNT. The active-site Proton donor is the K68.

Belongs to the OMP decarboxylase family. Type 1 subfamily. As to quaternary structure, homodimer.

It carries out the reaction orotidine 5'-phosphate + H(+) = UMP + CO2. Its pathway is pyrimidine metabolism; UMP biosynthesis via de novo pathway; UMP from orotate: step 2/2. Catalyzes the decarboxylation of orotidine 5'-monophosphate (OMP) to uridine 5'-monophosphate (UMP). In Rhodopseudomonas palustris (strain ATCC BAA-98 / CGA009), this protein is Orotidine 5'-phosphate decarboxylase.